The sequence spans 166 residues: Spiderine-1a (166 aa).

Residues 1 to 18 (MKFALVLLGVCAFYLVNA) form the signal peptide. Positions 19 to 58 (TGDLETELEASELQELQEALDLIGETPLESLEAEELEEAR) are excised as a propeptide. Positions 59–99 (KFKWGKLFSTAKKLYKKGKKLSKNKNFKKALKFGKQLAKNL) are linear cationic cytotoxin domain. The Oxytoxin-type inhibitor cystine knot (ICK) domain occupies 113-166 (NNKCWAIGTTCSDDCDCCPEHHCHCPAGKWLPGLFRCTCQVTESDKVNKCPPAE). 5 cysteine pairs are disulfide-bonded: cysteine 116-cysteine 130, cysteine 123-cysteine 135, cysteine 127-cysteine 162, cysteine 129-cysteine 151, and cysteine 137-cysteine 149.

The protein belongs to the spiderine family. Cationic/spiderine subfamily. Expressed by the venom gland.

It localises to the secreted. Its function is as follows. Has antimicrobial, insecticidal, cytolytic and cytotoxic activity. Active against E.coli DH5alpha, E.faecalis VKM B 871, B.subtilis VKM B 501, A.globiformis VKM Ac 1112, P.aeruginosa PAO1 and S.aureus 209P in submicromolar or low micromolar ranges. Lyses human erythrocytes. Kills HeLA and A549 cells. The protein is Spiderine-1a of Oxyopes takobius (Lynx spider).